The chain runs to 94 residues: Cell division topological specificity factor (94 aa).

This sequence belongs to the MinE family.

In terms of biological role, prevents the cell division inhibition by proteins MinC and MinD at internal division sites while permitting inhibition at polar sites. This ensures cell division at the proper site by restricting the formation of a division septum at the midpoint of the long axis of the cell. This Alkalilimnicola ehrlichii (strain ATCC BAA-1101 / DSM 17681 / MLHE-1) protein is Cell division topological specificity factor.